The chain runs to 201 residues: MAVFVANESGASDVDEVRLAALARFVLDAMKVNPLAELSVMLVEPKAMTDLHVRYMGEEGPTDVLSFPQDDAFDASWSESVDDDPTTLLGDVVLCPDVARRQAEQAGHSFDRELSLLCTHGILHLLGYDHAEPDEEREMWKVQSQLLASWDGADGADGADGARGAADGAADGGEGRRGDQGRRGDQGRGGGAGEPPAAPAR.

Residues His-120, His-124, and His-130 each coordinate Zn(2+). The disordered stretch occupies residues 151–201 (DGADGADGADGARGAADGAADGGEGRRGDQGRRGDQGRGGGAGEPPAAPAR). The span at 173–186 (GEGRRGDQGRRGDQ) shows a compositional bias: basic and acidic residues.

This sequence belongs to the endoribonuclease YbeY family. It depends on Zn(2+) as a cofactor.

It is found in the cytoplasm. Its function is as follows. Single strand-specific metallo-endoribonuclease involved in late-stage 70S ribosome quality control and in maturation of the 3' terminus of the 16S rRNA. This is Endoribonuclease YbeY from Frankia casuarinae (strain DSM 45818 / CECT 9043 / HFP020203 / CcI3).